A 155-amino-acid polypeptide reads, in one-letter code: Ribosome maturation factor RimP (155 aa).

The protein belongs to the RimP family.

It is found in the cytoplasm. In terms of biological role, required for maturation of 30S ribosomal subunits. This chain is Ribosome maturation factor RimP, found in Deinococcus geothermalis (strain DSM 11300 / CIP 105573 / AG-3a).